The primary structure comprises 213 residues: GrpE protein homolog, mitochondrial (213 aa).

A disordered region spans residues 35 to 55 (STEKQPEEATEQKATESSPEV). The segment covering 38–55 (KQPEEATEQKATESSPEV) has biased composition (basic and acidic residues).

It belongs to the GrpE family. Probable component of the PAM complex at least composed of a mitochondrial HSP70 protein, Roe1, TIM44, blp/TIM16 and TIM14.

It localises to the mitochondrion matrix. In terms of biological role, essential component of the PAM complex, a complex required for the translocation of transit peptide-containing proteins from the inner membrane into the mitochondrial matrix in an ATP-dependent manner. Seems to control the nucleotide-dependent binding of mitochondrial HSP70 to substrate proteins. The chain is GrpE protein homolog, mitochondrial (Roe1) from Drosophila melanogaster (Fruit fly).